The chain runs to 370 residues: Peptide chain release factor 1 (370 aa).

Position 239 is an N5-methylglutamine (glutamine 239).

It belongs to the prokaryotic/mitochondrial release factor family. In terms of processing, methylated by PrmC. Methylation increases the termination efficiency of RF1.

The protein resides in the cytoplasm. Functionally, peptide chain release factor 1 directs the termination of translation in response to the peptide chain termination codons UAG and UAA. This chain is Peptide chain release factor 1, found in Bacteroides fragilis (strain ATCC 25285 / DSM 2151 / CCUG 4856 / JCM 11019 / LMG 10263 / NCTC 9343 / Onslow / VPI 2553 / EN-2).